The following is a 534-amino-acid chain: Calcium-dependent protein kinase 18 (534 aa).

The interval 1–49 (MGLCFSSPKATRRGTGSRNPNPDSPTQGKASEKVSNKNKKNTKKIQLRH) is disordered. Gly-2 is lipidated: N-myristoyl glycine. Positions 14–29 (GTGSRNPNPDSPTQGK) are enriched in polar residues. Over residues 36-47 (NKNKKNTKKIQL) the composition is skewed to basic residues. One can recognise a Protein kinase domain in the interval 71-331 (YTIGKLLGHG…AAQALSHSWV (261 aa)). ATP contacts are provided by residues 77–85 (LGHGQFGFT) and Lys-100. Asp-197 serves as the catalytic Proton acceptor. Ser-237 carries the phosphoserine modification. Positions 337-367 (ASEVPIDISVLNNMRQFVKFSRLKQIALRAL) are autoinhibitory domain. EF-hand domains follow at residues 374 to 409 (DELD…DVPW), 411 to 446 (LKDA…VNQL), 453 to 488 (KWQQ…KGSI), and 491 to 518 (LLEE…ASLK). Residues Asp-387, Asp-389, Asn-391, Ser-393, Glu-398, Asp-424, Asn-426, Asp-428, Glu-435, Asp-466, Asp-468, Asp-470, Glu-477, Asp-496, Asp-498, Asp-500, and Arg-502 each coordinate Ca(2+). Ser-504 carries the post-translational modification Phosphoserine. Glu-507 contacts Ca(2+).

It belongs to the protein kinase superfamily. Ser/Thr protein kinase family. CDPK subfamily.

The protein resides in the membrane. The catalysed reaction is L-seryl-[protein] + ATP = O-phospho-L-seryl-[protein] + ADP + H(+). It catalyses the reaction L-threonyl-[protein] + ATP = O-phospho-L-threonyl-[protein] + ADP + H(+). Activated by calcium. Autophosphorylation may play an important role in the regulation of the kinase activity. Its function is as follows. May play a role in signal transduction pathways that involve calcium as a second messenger. This is Calcium-dependent protein kinase 18 (CPK18) from Arabidopsis thaliana (Mouse-ear cress).